Here is a 186-residue protein sequence, read N- to C-terminus: UPF0398 protein LCA_0919 (186 aa).

The protein belongs to the UPF0398 family.

In Latilactobacillus sakei subsp. sakei (strain 23K) (Lactobacillus sakei subsp. sakei), this protein is UPF0398 protein LCA_0919.